Reading from the N-terminus, the 348-residue chain is Dihydroorotase (348 aa).

Positions 13 and 15 each coordinate Zn(2+). Substrate-binding positions include His-15–Arg-17 and Asn-41. Positions 99, 136, and 174 each coordinate Zn(2+). Lys-99 bears the N6-carboxylysine mark. A substrate-binding site is contributed by His-136. Residue Leu-219 coordinates substrate. Asp-247 lines the Zn(2+) pocket. Residue Asp-247 is part of the active site. Residues His-251 and Ala-263 each contribute to the substrate site.

Belongs to the metallo-dependent hydrolases superfamily. DHOase family. Class II DHOase subfamily. In terms of assembly, homodimer. The cofactor is Zn(2+).

It carries out the reaction (S)-dihydroorotate + H2O = N-carbamoyl-L-aspartate + H(+). The protein operates within pyrimidine metabolism; UMP biosynthesis via de novo pathway; (S)-dihydroorotate from bicarbonate: step 3/3. In terms of biological role, catalyzes the reversible cyclization of carbamoyl aspartate to dihydroorotate. The chain is Dihydroorotase from Rhizobium johnstonii (strain DSM 114642 / LMG 32736 / 3841) (Rhizobium leguminosarum bv. viciae).